Consider the following 482-residue polypeptide: Anthranilate synthase component 1 (482 aa).

L-tryptophan-binding positions include Ser47 and 267–269 (PYM). 302–303 (GT) provides a ligand contact to chorismate. Residue Glu329 coordinates Mg(2+). Chorismate is bound by residues Tyr417, Arg437, 451–453 (GGG), and Gly453. Glu466 provides a ligand contact to Mg(2+).

This sequence belongs to the anthranilate synthase component I family. As to quaternary structure, heterotetramer consisting of two non-identical subunits: a beta subunit (TrpG) and a large alpha subunit (TrpE). It depends on Mg(2+) as a cofactor.

It carries out the reaction chorismate + L-glutamine = anthranilate + pyruvate + L-glutamate + H(+). The protein operates within amino-acid biosynthesis; L-tryptophan biosynthesis; L-tryptophan from chorismate: step 1/5. With respect to regulation, feedback inhibited by tryptophan. Part of a heterotetrameric complex that catalyzes the two-step biosynthesis of anthranilate, an intermediate in the biosynthesis of L-tryptophan. In the first step, the glutamine-binding beta subunit (TrpG) of anthranilate synthase (AS) provides the glutamine amidotransferase activity which generates ammonia as a substrate that, along with chorismate, is used in the second step, catalyzed by the large alpha subunit of AS (TrpE) to produce anthranilate. In the absence of TrpG, TrpE can synthesize anthranilate directly from chorismate and high concentrations of ammonia. The protein is Anthranilate synthase component 1 (trpE) of Spirochaeta aurantia.